A 101-amino-acid polypeptide reads, in one-letter code: Small ribosomal subunit protein uS14 (101 aa).

It belongs to the universal ribosomal protein uS14 family. As to quaternary structure, part of the 30S ribosomal subunit. Contacts proteins S3 and S10.

Binds 16S rRNA, required for the assembly of 30S particles and may also be responsible for determining the conformation of the 16S rRNA at the A site. This Cereibacter sphaeroides (strain ATCC 17029 / ATH 2.4.9) (Rhodobacter sphaeroides) protein is Small ribosomal subunit protein uS14.